The following is a 437-amino-acid chain: NADH-ubiquinone oxidoreductase chain 4 (437 aa).

The next 13 membrane-spanning stretches (helical) occupy residues 8–28, 50–70, 78–98, 100–120, 132–152, 177–197, 212–232, 239–259, 266–286, 297–317, 324–344, 361–381, and 417–437; these read GASI…AFII, LTPI…LVLI, YKYI…FCVC, FLTF…LILL, FYLM…LLYL, LVGL…HLWL, LAGV…NFII, VISV…IICI, ALVA…ILMM, TMIA…LSYL, LMFM…WFLF, LLII…MCII, and HVLT…LFSV.

The protein belongs to the complex I subunit 4 family.

Its subcellular location is the mitochondrion membrane. The catalysed reaction is a ubiquinone + NADH + 5 H(+)(in) = a ubiquinol + NAD(+) + 4 H(+)(out). Functionally, core subunit of the mitochondrial membrane respiratory chain NADH dehydrogenase (Complex I) that is believed to belong to the minimal assembly required for catalysis. Complex I functions in the transfer of electrons from NADH to the respiratory chain. The immediate electron acceptor for the enzyme is believed to be ubiquinone. In Albinaria caerulea (Land snail), this protein is NADH-ubiquinone oxidoreductase chain 4 (ND4).